The following is a 207-amino-acid chain: Guanylate kinase (207 aa).

The region spanning 5–184 is the Guanylate kinase-like domain; sequence GNLFIVSAPS…ALADLKSIIF (180 aa). ATP is bound at residue 12–19; the sequence is APSGAGKS.

It belongs to the guanylate kinase family.

Its subcellular location is the cytoplasm. It catalyses the reaction GMP + ATP = GDP + ADP. Functionally, essential for recycling GMP and indirectly, cGMP. The protein is Guanylate kinase of Shewanella denitrificans (strain OS217 / ATCC BAA-1090 / DSM 15013).